A 209-amino-acid chain; its full sequence is Thymidine kinase (209 aa).

ATP is bound by residues 9 to 16 (AAMNAGKS) and 88 to 91 (DEAQ). The active-site Proton acceptor is the Glu89. The Zn(2+) site is built by Cys146, Cys148, Cys183, and His186.

This sequence belongs to the thymidine kinase family. Homotetramer.

The protein resides in the cytoplasm. It carries out the reaction thymidine + ATP = dTMP + ADP + H(+). This Legionella pneumophila (strain Paris) protein is Thymidine kinase.